Here is a 920-residue protein sequence, read N- to C-terminus: Rho guanine nucleotide exchange factor 1 (920 aa).

In terms of domain architecture, RGSL spans 39–230 (DQNSQFQSLE…SLYMRHLGVR (192 aa)). Residues 231-404 (TKSGDKKSGR…PGWRELVPPD (174 aa)) are disordered. Positions 281–311 (DCRHLKVEADAEKPGPADRKGGLGMSSRDRT) are enriched in basic and acidic residues. Residues 364-380 (STEDNGETESPEPGDDG) show a composition bias toward acidic residues. A phosphoserine mark is found at S373, G386, E390, S408, and S412. The DH domain maps to 415 to 604 (KRQEVISELL…REILHHVNQA (190 aa)). Phosphothreonine is present on residues R432 and T694. In terms of domain architecture, PH spans 646 to 759 (KLVHEGPLTW…WCNLITETAG (114 aa)). Residue Y737 is modified to Phosphotyrosine; by JAK2. 2 disordered regions span residues 764–797 (PAPA…AEMA) and 840–864 (TEED…PGPV). Residues 865–894 (HTQEIEENLLSLEVAIRQLEELEEEFCRLR) are a coiled coil. Position 905 is a phosphoserine (S905).

Interacts with RHOA, GNA12 and GNA13. Homooligomerizes through the coiled coil region. Interacts with CTNNAL1. May interact with CCPG1. Phosphorylated by PKCA. Angiotensin-2 induced Tyr-737 phosphorylation is mediated by JAK2. Isoform 5 is phosphorylated at 'Ser-390'. In terms of tissue distribution, ubiquitously expressed.

It localises to the cytoplasm. It is found in the membrane. Seems to play a role in the regulation of RhoA GTPase by guanine nucleotide-binding alpha-12 (GNA12) and alpha-13 (GNA13) subunits. Acts as a GTPase-activating protein (GAP) for GNA12 and GNA13, and as guanine nucleotide exchange factor (GEF) for RhoA GTPase. Activated G alpha 13/GNA13 stimulates the RhoGEF activity through interaction with the RGS-like domain. This GEF activity is inhibited by binding to activated GNA12. Mediates angiotensin-2-induced RhoA activation. Isoform 3 and isoform 4 do not homooligomerize and show an enhanced RhoGEF activity. In lymphoid follicles, may trigger activation of GNA13 as part of S1PR2-dependent signaling pathway that leads to inhibition of germinal center (GC) B cell growth and migration outside the GC niche. The polypeptide is Rho guanine nucleotide exchange factor 1 (Arhgef1) (Mus musculus (Mouse)).